We begin with the raw amino-acid sequence, 248 residues long: tRNA (guanine-N(1)-)-methyltransferase (248 aa).

S-adenosyl-L-methionine-binding positions include Gly-113 and 133–138 (IGDYVL).

This sequence belongs to the RNA methyltransferase TrmD family. In terms of assembly, homodimer.

Its subcellular location is the cytoplasm. It catalyses the reaction guanosine(37) in tRNA + S-adenosyl-L-methionine = N(1)-methylguanosine(37) in tRNA + S-adenosyl-L-homocysteine + H(+). Its function is as follows. Specifically methylates guanosine-37 in various tRNAs. The protein is tRNA (guanine-N(1)-)-methyltransferase of Shewanella baltica (strain OS223).